We begin with the raw amino-acid sequence, 255 residues long: UPF0246 protein BVU_0413 (255 aa).

The protein belongs to the UPF0246 family.

The protein is UPF0246 protein BVU_0413 of Phocaeicola vulgatus (strain ATCC 8482 / DSM 1447 / JCM 5826 / CCUG 4940 / NBRC 14291 / NCTC 11154) (Bacteroides vulgatus).